The following is a 438-amino-acid chain: UDP-N-acetyl-D-mannosamine dehydrogenase (438 aa).

Positions 21, 22, 41, 46, 93, and 131 each coordinate NAD(+). R160, V161, K212, N216, R219, H250, R252, and G263 together coordinate UDP-N-acetyl-alpha-D-mannosaminouronate. The Proton donor/acceptor role is filled by K212. Catalysis depends on C266, which acts as the Nucleophile. Residues Y323 and K324 each contribute to the UDP-N-acetyl-alpha-D-mannosaminouronate site. Residue R331 participates in NAD(+) binding. A UDP-N-acetyl-alpha-D-mannosaminouronate-binding site is contributed by K409.

The protein belongs to the UDP-glucose/GDP-mannose dehydrogenase family. As to quaternary structure, homotetramer; probably dimer of dimers.

The enzyme catalyses UDP-N-acetyl-alpha-D-mannosamine + 2 NAD(+) + H2O = UDP-N-acetyl-alpha-D-mannosaminouronate + 2 NADH + 3 H(+). Its function is as follows. Catalyzes the four-electron oxidation of UDP-N-acetyl-D-mannosamine (UDP-ManNAc), reducing NAD(+) and releasing UDP-N-acetylmannosaminuronic acid (UDP-ManNAcA). In Methanococcus aeolicus (strain ATCC BAA-1280 / DSM 17508 / OCM 812 / Nankai-3), this protein is UDP-N-acetyl-D-mannosamine dehydrogenase (wecC).